Reading from the N-terminus, the 180-residue chain is Large ribosomal subunit protein uL5 (180 aa).

The protein belongs to the universal ribosomal protein uL5 family. As to quaternary structure, part of the 50S ribosomal subunit; part of the 5S rRNA/L5/L18/L25 subcomplex. Contacts the 5S rRNA and the P site tRNA. Forms a bridge to the 30S subunit in the 70S ribosome.

Its function is as follows. This is one of the proteins that bind and probably mediate the attachment of the 5S RNA into the large ribosomal subunit, where it forms part of the central protuberance. In the 70S ribosome it contacts protein S13 of the 30S subunit (bridge B1b), connecting the 2 subunits; this bridge is implicated in subunit movement. Contacts the P site tRNA; the 5S rRNA and some of its associated proteins might help stabilize positioning of ribosome-bound tRNAs. The sequence is that of Large ribosomal subunit protein uL5 from Cupriavidus necator (strain ATCC 17699 / DSM 428 / KCTC 22496 / NCIMB 10442 / H16 / Stanier 337) (Ralstonia eutropha).